A 681-amino-acid polypeptide reads, in one-letter code: Serine/threonine-protein kinase PAK 6 (681 aa).

Disordered stretches follow at residues 1–30 (MFRK…DPKE), 200–256 (QSSP…ESSL), and 268–355 (TAAT…PRTW). One can recognise a CRIB domain in the interval 12–25 (ISAPQNFQHRVHTS). The interval 26–406 (FDPKEGKFVG…VVDQGDPRLL (381 aa)) is linker. Composition is skewed to low complexity over residues 201 to 212 (SSPPGASPPTGT) and 268 to 278 (TAATAPPSSSK). Residues 308-333 (SLPSDQPVGTFSPLTTSDTSSPQKSL) are compositionally biased toward polar residues. The Protein kinase domain maps to 407–658 (LDSYVKIGEG…AQELLDHPFL (252 aa)). Residues 413 to 421 (IGEGSTGIV) and K436 each bind ATP. D526 functions as the Proton acceptor in the catalytic mechanism. S560 carries the phosphoserine; by autocatalysis modification.

The protein belongs to the protein kinase superfamily. STE Ser/Thr protein kinase family. STE20 subfamily. In terms of assembly, interacts tightly with GTP-bound but not GDP-bound CDC42/p21 and RAC1. Interacts with the androgen receptor AR. Interacts with IQGAP1 and PPM1B. In terms of processing, autophosphorylated. Phosphorylated by MAP2K6/MAPKK6, leading to PAK6 activation.

The protein resides in the cytoplasm. Its subcellular location is the nucleus. It catalyses the reaction L-seryl-[protein] + ATP = O-phospho-L-seryl-[protein] + ADP + H(+). The catalysed reaction is L-threonyl-[protein] + ATP = O-phospho-L-threonyl-[protein] + ADP + H(+). Its function is as follows. Serine/threonine protein kinase that plays a role in the regulation of gene transcription. The kinase activity is induced by various effectors including AR or MAP2K6/MAPKK6. Phosphorylates the DNA-binding domain of androgen receptor/AR and thereby inhibits AR-mediated transcription. Also inhibits ESR1-mediated transcription. May play a role in cytoskeleton regulation by interacting with IQGAP1. May protect cells from apoptosis through phosphorylation of BAD. In Pongo abelii (Sumatran orangutan), this protein is Serine/threonine-protein kinase PAK 6 (PAK6).